The sequence spans 612 residues: Sulfite reductase [NADPH] flavoprotein alpha-component (612 aa).

The region spanning 64 to 202 is the Flavodoxin-like domain; sequence VTLISASQTG…QAQQWRQQVV (139 aa). FMN-binding positions include 70-75, 117-120, and 153-162; these read SQTGNA, STQG, and LGDTSYEHFC. In terms of domain architecture, FAD-binding FR-type spans 247–461; that stretch reads TAPLTAQLSV…IEHNDNFRLP (215 aa). Residues Thr335, Lys369, 399-402, 417-419, Tyr423, and 432-435 each bind FAD; these read RLYS, TVG, and GGAS. Residues 532 to 533, 538 to 542, and Asp574 each bind NADP(+); these read SR and KIYVQ. Tyr612 contacts FAD.

The protein belongs to the NADPH-dependent sulphite reductase flavoprotein subunit CysJ family. This sequence in the N-terminal section; belongs to the flavodoxin family. In the C-terminal section; belongs to the flavoprotein pyridine nucleotide cytochrome reductase family. Alpha(8)-beta(8). The alpha component is a flavoprotein, the beta component is a hemoprotein. It depends on FAD as a cofactor. FMN serves as cofactor.

It catalyses the reaction hydrogen sulfide + 3 NADP(+) + 3 H2O = sulfite + 3 NADPH + 4 H(+). It functions in the pathway sulfur metabolism; hydrogen sulfide biosynthesis; hydrogen sulfide from sulfite (NADPH route): step 1/1. Its function is as follows. Component of the sulfite reductase complex that catalyzes the 6-electron reduction of sulfite to sulfide. This is one of several activities required for the biosynthesis of L-cysteine from sulfate. The flavoprotein component catalyzes the electron flow from NADPH -&gt; FAD -&gt; FMN to the hemoprotein component. This chain is Sulfite reductase [NADPH] flavoprotein alpha-component, found in Yersinia pestis bv. Antiqua (strain Nepal516).